Here is a 507-residue protein sequence, read N- to C-terminus: ATP synthase subunit alpha, mitochondrial (507 aa).

ATP is bound at residue 171–178 (GDRQTGKT).

Belongs to the ATPase alpha/beta chains family. F-type ATPases have 2 components, CF(1) - the catalytic core - and CF(0) - the membrane proton channel. CF(1) has five subunits: alpha(3), beta(3), gamma(1), delta(1), epsilon(1). CF(0) has three main subunits: a, b and c.

The protein resides in the mitochondrion. It localises to the mitochondrion inner membrane. Mitochondrial membrane ATP synthase (F(1)F(0) ATP synthase or Complex V) produces ATP from ADP in the presence of a proton gradient across the membrane which is generated by electron transport complexes of the respiratory chain. F-type ATPases consist of two structural domains, F(1) - containing the extramembraneous catalytic core, and F(0) - containing the membrane proton channel, linked together by a central stalk and a peripheral stalk. During catalysis, ATP synthesis in the catalytic domain of F(1) is coupled via a rotary mechanism of the central stalk subunits to proton translocation. Subunits alpha and beta form the catalytic core in F(1). Rotation of the central stalk against the surrounding alpha(3)beta(3) subunits leads to hydrolysis of ATP in three separate catalytic sites on the beta subunits. Subunit alpha does not bear the catalytic high-affinity ATP-binding sites. The polypeptide is ATP synthase subunit alpha, mitochondrial (ATPA) (Brassica napus (Rape)).